The chain runs to 171 residues: Interleukin-26 (171 aa).

The first 21 residues, 1–21 (MLVNFILRCGLLLVTLSLAIA), serve as a signal peptide directing secretion.

Belongs to the IL-10 family. Homodimer. In terms of tissue distribution, expressed in HVS transformed T-cells but not other T-cell lines or primary stimulated T-cells. Expressed in colonic T-cells including Th17 inflammatory T-cells; the expression is significantly increased in serum of patients with Crohn's disease (at protein level).

Its subcellular location is the secreted. Functionally, may play a role in local mechanisms of mucosal immunity and seems to have a pro-inflammatory function. May play a role in inflammatory bowel disease. Activates STAT1 and STAT3, MAPK1/3 (ERK1/2), JUN and AKT. Induces expression of SOCS3, TNF-alpha and IL-8, secretion of IL-8 and IL-10 and surface expression of ICAM1. Decreases proliferation of intestinal epithelial cells. Is inhibited by heparin. The chain is Interleukin-26 (IL26) from Homo sapiens (Human).